The following is a 366-amino-acid chain: UDP-N-acetylglucosamine--N-acetylmuramyl-(pentapeptide) pyrophosphoryl-undecaprenol N-acetylglucosamine transferase (366 aa).

Residues 10–12 (TGG), Asn124, Arg165, Ser195, Ile250, and Gln295 each bind UDP-N-acetyl-alpha-D-glucosamine.

The protein belongs to the glycosyltransferase 28 family. MurG subfamily.

It is found in the cell inner membrane. It catalyses the reaction di-trans,octa-cis-undecaprenyl diphospho-N-acetyl-alpha-D-muramoyl-L-alanyl-D-glutamyl-meso-2,6-diaminopimeloyl-D-alanyl-D-alanine + UDP-N-acetyl-alpha-D-glucosamine = di-trans,octa-cis-undecaprenyl diphospho-[N-acetyl-alpha-D-glucosaminyl-(1-&gt;4)]-N-acetyl-alpha-D-muramoyl-L-alanyl-D-glutamyl-meso-2,6-diaminopimeloyl-D-alanyl-D-alanine + UDP + H(+). Its pathway is cell wall biogenesis; peptidoglycan biosynthesis. Functionally, cell wall formation. Catalyzes the transfer of a GlcNAc subunit on undecaprenyl-pyrophosphoryl-MurNAc-pentapeptide (lipid intermediate I) to form undecaprenyl-pyrophosphoryl-MurNAc-(pentapeptide)GlcNAc (lipid intermediate II). The chain is UDP-N-acetylglucosamine--N-acetylmuramyl-(pentapeptide) pyrophosphoryl-undecaprenol N-acetylglucosamine transferase from Thermodesulfovibrio yellowstonii (strain ATCC 51303 / DSM 11347 / YP87).